A 345-amino-acid polypeptide reads, in one-letter code: Twinfilin (345 aa).

ADF-H domains lie at 4–139 (QTGI…KHKR) and 177–312 (GISC…DELH). The interval 320 to 345 (PAFAKPKGPPNRGAKRLTRPSNEDQV) is disordered.

Belongs to the actin-binding proteins ADF family. Twinfilin subfamily. In terms of assembly, interacts with G-actin; ADP-actin form.

The protein localises to the cytoplasm. Its subcellular location is the cytoskeleton. The protein resides in the cell cortex. In terms of biological role, actin-binding protein involved in motile and morphological processes. Inhibits actin polymerization, likely by sequestering G-actin. This is Twinfilin (twf) from Drosophila pseudoobscura pseudoobscura (Fruit fly).